We begin with the raw amino-acid sequence, 638 residues long: Epithelial sodium channel subunit beta (638 aa).

Over 1-50 the chain is Cytoplasmic; that stretch reads MPVKKYLLKCLHRLQKGPGYTYKELLVWYCNNTNTHGPKRIICEGPKKKA. The helical transmembrane segment at 51-71 threads the bilayer; the sequence is MWFLLTLLFACLVCWQWGVFI. Over 72–530 the chain is Extracellular; it reads QTYLSWEVSV…GGQFGFWMGG (459 aa). 9 cysteine pairs are disulfide-bonded: Cys98-Cys270, Cys182-Cys187, Cys194-Cys201, Cys247-Cys254, Cys359-Cys446, Cys384-Cys442, Cys388-Cys438, Cys397-Cys424, and Cys399-Cys413. N-linked (GlcNAc...) asparagine glycosylation is found at Asn135 and Asn141. The chain crosses the membrane as a helical span at residues 531–551; the sequence is SVLCLIEFGEIIIDFIWITVI. Over 552 to 638 the chain is Cytoplasmic; it reads KLVASCKGLR…MESDSEVEAI (87 aa). The tract at residues 598-620 is disordered; the sequence is NAEVYPDQQTLPIPGTPPPNYDS. Positions 614-618 match the PY motif; recruits WW domain-containing proteins and is thereby required for ubiquitination and inhibition of the channel by NEDD4 and NEDD4L motif; the sequence is PPPNY. Phosphoserine is present on residues Ser631 and Ser633.

Belongs to the amiloride-sensitive sodium channel (TC 1.A.6) family. SCNN1B subfamily. Component of the heterotrimeric epithelial sodium channel (ENaC) composed of an alpha/SCNN1A, a beta/SCNN1B and a gamma/SCNN1G subunit. Interacts with WWP1 (via WW domains). Interacts with WWP2 (via WW domains). Interacts with the full-length immature form of PCSK9 (pro-PCSK9). Interacts (N-glycosylated) with BPIFA1; the interaction is direct and inhibits the proteolytic processing of SCNN1A and SCNN1G and the activation of ENaC. In terms of processing, ubiquitinated. Can be ubiquitinated at multiple sites and undergo monoubiquitination and polyubiquitination. Ubiquitination by NEDD4 or NEDD4L inhibits the ENaC channel through endocytosis, intracellular retention and degradation of its individual subunits. However, some studies could not confirm the ubiquitination of this subunit of the ENaC. Post-translationally, N-glycosylated. N-glycosylation is required for interaction with BPIFA1. Phosphorylated on serine and threonine residues. Aldosterone and insulin increase the basal level of phosphorylation. Expressed in lung and epididymis. In the caput region of the epididymis, expressed at the luminal and basolateral surfaces of the ducts and in the smooth muscle coat. In the caudal region of the epididymis, expressed along the luminal border but not continuously, in the smooth muscle coat, in the interstitial muscle tissue and in sperm in the caudal lumen.

The protein localises to the apical cell membrane. The protein resides in the cytoplasmic vesicle membrane. The enzyme catalyses Na(+)(in) = Na(+)(out). Its activity is regulated as follows. Originally identified and characterized by its inhibition by the diuretic drug amiloride. Its function is as follows. This is one of the three pore-forming subunits of the heterotrimeric epithelial sodium channel (ENaC), a critical regulator of sodium balance and fluid homeostasis. ENaC operates in epithelial tissues, where it mediates the electrodiffusion of sodium ions from extracellular fluid through the apical membrane of cells, with water following osmotically. It plays a key role in maintaining sodium homeostasis through electrogenic sodium reabsorption in the kidneys. This subunit is not essential for ENaC function in airway surface liquid homeostasis and proper mucus clearance. The sequence is that of Epithelial sodium channel subunit beta from Rattus norvegicus (Rat).